The following is a 1283-amino-acid chain: 5-oxoprolinase PfmaA (1283 aa).

Positions 1256–1283 (NTPGGGAWGKPEGDADGYREEDQAGDGI) are disordered. Positions 1266-1277 (PEGDADGYREED) are enriched in basic and acidic residues.

The protein belongs to the oxoprolinase family. As to quaternary structure, homodimer.

It catalyses the reaction 5-oxo-L-proline + ATP + 2 H2O = L-glutamate + ADP + phosphate + H(+). Its function is as follows. 5-oxoprolinase; part of the gene cluster that mediates the biosynthesis of dihydroxynaphthalene (DHN)-melanin, a bluish-green pigment forming a dark layer in the conidial wall that protects the conidia from UV radiations. The first step of the pathway is the production of the pentaketide 1,3,6,8-tetrahydroxynaphthalene (1,3,6,8-THN or T4HN) by the polyketide synthase PfmaE though condensation of acetyl-CoA with malonyl-CoA. T4HN is not stable and easily oxidizes into the stable form flaviolin. T4HN is also substrate of the hydroxynaphthalene reductase PfmaG to yield scytalone. The scytalone dehydratase PfmaJ then reduces scytalone to 1,3,8-THN. 1,3,8-THN is then substrate of the hydroxynaphthalene reductase PfmaI to yield vermelone. Vermelone is further converted by the multicopper oxidase PfmaD to 1,8-DHN. Finally the laccase PFICI_06862 transforms 1,8-DHN to DHN-melanin. The roles of the 5-oxoprolinase PfmaA and the proline iminopeptidase PfmaB within the cluster have not been elucidated yet. The chain is 5-oxoprolinase PfmaA from Pestalotiopsis fici (strain W106-1 / CGMCC3.15140).